A 911-amino-acid polypeptide reads, in one-letter code: Valine--tRNA ligase (911 aa).

The 'HIGH' region motif lies at 57 to 67; it reads PTVSGSLHVGH. Positions 599-603 match the 'KMSKS' region motif; that stretch reads KMSKS. Position 602 (K602) interacts with ATP. The interval 882 to 911 is disordered; the sequence is EESAAEGTPETEVAVEASELGEPPAKKPKH.

Belongs to the class-I aminoacyl-tRNA synthetase family. ValS type 2 subfamily. In terms of assembly, monomer.

Its subcellular location is the cytoplasm. The catalysed reaction is tRNA(Val) + L-valine + ATP = L-valyl-tRNA(Val) + AMP + diphosphate. Its function is as follows. Catalyzes the attachment of valine to tRNA(Val). As ValRS can inadvertently accommodate and process structurally similar amino acids such as threonine, to avoid such errors, it has a 'posttransfer' editing activity that hydrolyzes mischarged Thr-tRNA(Val) in a tRNA-dependent manner. In Bifidobacterium longum (strain NCC 2705), this protein is Valine--tRNA ligase.